The chain runs to 597 residues: MSKTEVRLRQPIVVVLGHVDHGKTTLLDKIRGTAVVKKEPGEMTQEVGASFVPSSVIEKVAQPLKGIIPVKLEIPGLLFIDTPGHELFSNLRRRGGSVADIAILVVDITEGFQKQTIESIEILKDKKVPFLVAANKIDRIPGWRPIENETFTKSFRSQSQSVQKALDNYVYKLVMQLAEMGFNAERFDRVRDFTRYVSIVPVSGKTGEGLPELLALLAGLTQQYLKTRLRAVEGPAKGVILEVKEEQGLGHTIDVIIYDGILRKSDTIVLGGINGVIVTKIRNILLPAPLQDMRMTRSGYRSIDEISAAAGVKISAPGLEEALAGSPLYVANDEAKLQEARKLIEEELSKVRFSKNSTGIVVKADSLGSLESLVAGFEKIGIPVRVADIGPITKRDLIEAELSAKEVEEYGIIAAFRVKPIPGLDTSKVKIIYNDIIYQLIDDTIKYIEDLRERRKRRTLDSLVLPGKIKILPGYVFRRSDPAIVGVEVLGGVVRPKYPLIREDGQRVGEVLAIQDNKKNIERATKGMEVSMSIKGNIMIGRQVQEGDVLYTDVPQEDLEILFKNYKDSITEDMMEVIKELIKIKKAENPLYGIFIQ.

A tr-type G domain is found at 8-225 (LRQPIVVVLG…LLAGLTQQYL (218 aa)). Residues 17-24 (GHVDHGKT) form a G1 region. 17–24 (GHVDHGKT) contributes to the GTP binding site. The segment at 42–46 (EMTQE) is G2. The segment at 81–84 (DTPG) is G3. Residues 81-85 (DTPGH) and 135-138 (NKID) each bind GTP. A G4 region spans residues 135 to 138 (NKID). A G5 region spans residues 203–205 (SGK).

This sequence belongs to the TRAFAC class translation factor GTPase superfamily. Classic translation factor GTPase family. IF-2 subfamily.

In terms of biological role, function in general translation initiation by promoting the binding of the formylmethionine-tRNA to ribosomes. Seems to function along with eIF-2. The sequence is that of Probable translation initiation factor IF-2 from Metallosphaera sedula (strain ATCC 51363 / DSM 5348 / JCM 9185 / NBRC 15509 / TH2).